Here is a 312-residue protein sequence, read N- to C-terminus: uncharacterized protein (312 aa).

Residue 112–118 (LIGLPMV) coordinates ATP.

It belongs to the MurCDEF family.

This is an uncharacterized protein from Methanothermobacter thermautotrophicus (strain ATCC 29096 / DSM 1053 / JCM 10044 / NBRC 100330 / Delta H) (Methanobacterium thermoautotrophicum).